We begin with the raw amino-acid sequence, 397 residues long: Alpha-2B adrenergic receptor (397 aa).

The helical transmembrane segment at 1–25 (AIAAIIIFLILFTIFGNALVILAVL) threads the bilayer. Over 26 to 36 (TSRSLRAPQNL) the chain is Cytoplasmic. A helical membrane pass occupies residues 37 to 62 (FLVSLAAADILVATLIIPFSLANELL). At 63-72 (GYWYFRRMWC) the chain is on the extracellular side. An intrachain disulfide couples Cys72 to Cys151. Residues 73-95 (KVYLALDVLFCTSSIVHLCAISL) traverse the membrane as a helical segment. The Cytoplasmic segment spans residues 96–117 (DRYWAVSRALEYNSKRTPRRIK). A helical transmembrane segment spans residues 118-140 (CIILMVWLIAAVISLPSLVYKGD). Residues 141 to 156 (QGPQPSGAPQCNLNQE) are Extracellular-facing. Residues 157 to 180 (TWYILASSIGSFFAPCLIMILVYL) traverse the membrane as a helical segment. The Cytoplasmic portion of the chain corresponds to 181 to 361 (RIYLIAKRSH…LSREKRFTFV (181 aa)). 2 disordered regions span residues 193–212 (GPRAKGAPGKSKFKQSRQVP) and 230–319 (AAGE…LQQP). The segment covering 280–300 (SLEEEAEEEEEGEEEREEECE) has biased composition (acidic residues). Low complexity predominate over residues 301–319 (PQALPASPASACSPPLQQP). The chain crosses the membrane as a helical span at residues 362–385 (LAVVIGVFVLCWFPFFFSYSLGAI). At 386–394 (CPQQCKVPH) the chain is on the extracellular side. The helical transmembrane segment at 395–397 (DLF) threads the bilayer.

It belongs to the G-protein coupled receptor 1 family. Adrenergic receptor subfamily. ADRA2B sub-subfamily. Interacts with RAB26. Interacts with PPP1R9B.

Its subcellular location is the cell membrane. Its function is as follows. Alpha-2 adrenergic receptors mediate the catecholamine-induced inhibition of adenylate cyclase through the action of G proteins. This Talpa europaea (European mole) protein is Alpha-2B adrenergic receptor (ADRA2B).